A 349-amino-acid polypeptide reads, in one-letter code: Nuclear distribution protein nudE homolog 1-A (349 aa).

A coiled-coil region spans residues 22-189 (VAMKYKQCSE…ELAVQQKQEK (168 aa)).

This sequence belongs to the nudE family. In terms of assembly, self-associates. Interacts with pafah1b1. Post-translationally, phosphorylated in mitosis.

It is found in the cytoplasm. Its subcellular location is the cytoskeleton. The protein localises to the microtubule organizing center. It localises to the centrosome. The protein resides in the spindle. It is found in the chromosome. Its subcellular location is the centromere. The protein localises to the kinetochore. It localises to the cleavage furrow. The protein resides in the cytoplasmic vesicle membrane. In terms of biological role, required for centrosome duplication and formation and function of the mitotic spindle. The polypeptide is Nuclear distribution protein nudE homolog 1-A (nde1-a) (Xenopus laevis (African clawed frog)).